A 449-amino-acid chain; its full sequence is Lysine-sensitive aspartokinase 3 (449 aa).

The segment at S2 to F245 is aspartokinase. K8–G11 is a binding site for ATP. Residues T45, E119, and R198–S201 each bind substrate. ATP contacts are provided by residues T221 to D222, Y227, R232, and K257 to V258. The segment at A246–E449 is interface. Residues F299 to E449 form a required for homodimerization region. The region spanning L313–N394 is the ACT domain. L-lysine is bound by residues M318, S321, F324 to L325, S338 to D340, and S345 to E346.

It belongs to the aspartokinase family. In terms of assembly, homodimer. In the inactive form a homotetramer is formed.

It catalyses the reaction L-aspartate + ATP = 4-phospho-L-aspartate + ADP. Its pathway is amino-acid biosynthesis; L-lysine biosynthesis via DAP pathway; (S)-tetrahydrodipicolinate from L-aspartate: step 1/4. With respect to regulation, synthesis and activity are sensitive to the allosteric inhibitor lysine, one of the end metabolites of the aspartic acid family branched pathway. The sequence is that of Lysine-sensitive aspartokinase 3 (lysC) from Escherichia coli (strain K12).